The sequence spans 211 residues: MGKGDPKKPRGKMSSYAFFVQTCREEHKKKHSDASVNFSEFSNKCSERWKTMSAKEKGKFEDMAKADKTHYERQMKTYIPPKGETKKKFKDPNAPKRPPSAFFLFCSEYHPKIKGEHPGLSIGDVAKKLGEMWNNTAADDKQPGEKKAAKLKEKYEKDIAAYQAKGKPEAAKKGVVKAEKSKKKKEEEEDEEDEEDEEEEDEEDEEDDDDE.

7 positions are modified to N6-acetyllysine: K3, K7, K8, K12, K28, K29, and K30. Residues 9–79 (PRGKMSSYAF…HYERQMKTYI (71 aa)) constitute a DNA-binding region (HMG box 1). The tract at residues 71–96 (YERQMKTYIPPKGETKKKFKDPNAPK) is disordered. Positions 83 to 94 (GETKKKFKDPNA) are enriched in basic and acidic residues. A DNA-binding region (HMG box 2) is located at residues 95 to 163 (PKRPPSAFFL…KYEKDIAAYQ (69 aa)). An N6-acetyllysine mark is found at K127, K128, K172, K173, K177, K180, K182, K183, K184, and K185. Positions 161-211 (AYQAKGKPEAAKKGVVKAEKSKKKKEEEEDEEDEEDEEEEDEEDEEDDDDE) are disordered. The segment covering 166–179 (GKPEAAKKGVVKAE) has biased composition (basic and acidic residues). Residues 187–211 (EEEDEEDEEDEEEEDEEDEEDDDDE) are compositionally biased toward acidic residues.

This sequence belongs to the HMGB family.

It localises to the nucleus. It is found in the chromosome. Binds preferentially single-stranded DNA and unwinds double-stranded DNA. The protein is High mobility group protein B1-like 1 (HMGB1P1) of Homo sapiens (Human).